The following is an 824-amino-acid chain: Glycerol-3-phosphate acyltransferase (824 aa).

The HXXXXD motif motif lies at Cys302–Met307.

This sequence belongs to the GPAT/DAPAT family.

It localises to the cell inner membrane. The enzyme catalyses sn-glycerol 3-phosphate + an acyl-CoA = a 1-acyl-sn-glycero-3-phosphate + CoA. The protein operates within phospholipid metabolism; CDP-diacylglycerol biosynthesis; CDP-diacylglycerol from sn-glycerol 3-phosphate: step 1/3. The chain is Glycerol-3-phosphate acyltransferase from Actinobacillus pleuropneumoniae serotype 5b (strain L20).